Here is a 312-residue protein sequence, read N- to C-terminus: MSVVDQKAVELPPRISEAGVADYFALLKPRVMSLVIFTALVGLMIAPGHIHPVLGFIAILCIAVGAGASGALNMALEGDIDVLMSRTANRPIPRGRITRGEAMGFGLTLSFFSVMTLGALVNWYAGGLLAFTIFFYVVIYTMGLKRRTAQNIVIGGAAGALPPVVAWAAATGSLSVEPLLLFLIIFFWTPPHFWALALFRSDDYARAGVPMLPVVAGPDATRLQILLYTIVLVAIAAAPWPLGYFDWVYGVTSLILGAGMLVLAIEVYRHRTGSQALRATRRLFAFSILYLFALFAVLLLDVVAKAVAPLIW.

8 helical membrane passes run 31 to 51 (VMSL…GHIH), 52 to 72 (PVLG…SGAL), 119 to 139 (ALVN…YVVI), 152 to 172 (IVIG…AATG), 179 to 199 (LLLF…LALF), 225 to 245 (ILLY…LGYF), 247 to 267 (WVYG…AIEV), and 283 to 303 (LFAF…LDVV).

Belongs to the UbiA prenyltransferase family. Protoheme IX farnesyltransferase subfamily.

It localises to the cell inner membrane. It catalyses the reaction heme b + (2E,6E)-farnesyl diphosphate + H2O = Fe(II)-heme o + diphosphate. It participates in porphyrin-containing compound metabolism; heme O biosynthesis; heme O from protoheme: step 1/1. In terms of biological role, converts heme B (protoheme IX) to heme O by substitution of the vinyl group on carbon 2 of heme B porphyrin ring with a hydroxyethyl farnesyl side group. This chain is Protoheme IX farnesyltransferase 2, found in Nitrobacter winogradskyi (strain ATCC 25391 / DSM 10237 / CIP 104748 / NCIMB 11846 / Nb-255).